Consider the following 143-residue polypeptide: MINISEKAISARTATATGRIHLRRSTIQAIREKKVKKGDVLEVSRVVGTQHAKNTFLQIPYCHNIPIEGVDVDFNVGEDYVEVSCTLTTTYKTGIEMEAISCVSGALINIWDMVKYLEKDESGNYPETRIDGIHVVEKRKTPV.

Residues Tyr-61–His-63 and Met-97–Glu-98 contribute to the substrate site. Asp-112 is an active-site residue.

It belongs to the MoaC family. In terms of assembly, homohexamer; trimer of dimers.

The catalysed reaction is (8S)-3',8-cyclo-7,8-dihydroguanosine 5'-triphosphate = cyclic pyranopterin phosphate + diphosphate. Its pathway is cofactor biosynthesis; molybdopterin biosynthesis. Functionally, catalyzes the conversion of (8S)-3',8-cyclo-7,8-dihydroguanosine 5'-triphosphate to cyclic pyranopterin monophosphate (cPMP). The protein is Probable cyclic pyranopterin monophosphate synthase of Thermoplasma acidophilum (strain ATCC 25905 / DSM 1728 / JCM 9062 / NBRC 15155 / AMRC-C165).